The primary structure comprises 185 residues: Superoxide dismutase [Cu-Zn] (185 aa).

The N-terminal stretch at methionine 1–alanine 18 is a signal peptide. The Cu cation site is built by histidine 85, histidine 87, and histidine 102. A disulfide bridge connects residues cysteine 92 and cysteine 180. Residues histidine 102, histidine 111, histidine 120, and aspartate 123 each contribute to the Zn(2+) site. Cu cation is bound at residue histidine 158.

It belongs to the Cu-Zn superoxide dismutase family. As to quaternary structure, homodimer. The cofactor is Cu cation. Zn(2+) is required as a cofactor.

Its subcellular location is the periplasm. The catalysed reaction is 2 superoxide + 2 H(+) = H2O2 + O2. Destroys radicals which are normally produced within the cells and which are toxic to biological systems. This is Superoxide dismutase [Cu-Zn] (sodC) from Francisella tularensis subsp. holarctica (strain LVS).